The sequence spans 485 residues: Acetyl-coenzyme A carboxylase carboxyl transferase subunit beta, chloroplastic (485 aa).

Positions 218 to 485 (LWIQCDNCYA…FFPLNKNEIK (268 aa)) constitute a CoA carboxyltransferase N-terminal domain. Positions 222, 225, 241, and 244 each coordinate Zn(2+). The C4-type zinc finger occupies 222-244 (CDNCYALIYKKALKFKMNVCEQC).

It belongs to the AccD/PCCB family. As to quaternary structure, acetyl-CoA carboxylase is a heterohexamer composed of biotin carboxyl carrier protein, biotin carboxylase and 2 subunits each of ACCase subunit alpha and ACCase plastid-coded subunit beta (accD). It depends on Zn(2+) as a cofactor.

Its subcellular location is the plastid. The protein localises to the chloroplast stroma. The enzyme catalyses N(6)-carboxybiotinyl-L-lysyl-[protein] + acetyl-CoA = N(6)-biotinyl-L-lysyl-[protein] + malonyl-CoA. It functions in the pathway lipid metabolism; malonyl-CoA biosynthesis; malonyl-CoA from acetyl-CoA: step 1/1. Its function is as follows. Component of the acetyl coenzyme A carboxylase (ACC) complex. Biotin carboxylase (BC) catalyzes the carboxylation of biotin on its carrier protein (BCCP) and then the CO(2) group is transferred by the transcarboxylase to acetyl-CoA to form malonyl-CoA. In Aethionema cordifolium (Lebanon stonecress), this protein is Acetyl-coenzyme A carboxylase carboxyl transferase subunit beta, chloroplastic.